We begin with the raw amino-acid sequence, 375 residues long: uncharacterized protein (375 aa).

7 helical membrane-spanning segments follow: residues 21–41 (LLLL…IVLF), 66–86 (IIVF…FCVS), 160–180 (LVGV…PGIV), 203–223 (LVGL…HLLI), 234–254 (FYMV…FHLF), 289–309 (VISF…YFLI), and 338–358 (FFLM…MLFF).

It is found in the cell membrane. This is an uncharacterized protein from Mycoplasma genitalium (strain ATCC 33530 / DSM 19775 / NCTC 10195 / G37) (Mycoplasmoides genitalium).